A 468-amino-acid chain; its full sequence is ATP synthase subunit beta (468 aa).

155-162 (GGAGVGKT) provides a ligand contact to ATP.

This sequence belongs to the ATPase alpha/beta chains family. As to quaternary structure, F-type ATPases have 2 components, CF(1) - the catalytic core - and CF(0) - the membrane proton channel. CF(1) has five subunits: alpha(3), beta(3), gamma(1), delta(1), epsilon(1). CF(0) has three main subunits: a(1), b(2) and c(9-12). The alpha and beta chains form an alternating ring which encloses part of the gamma chain. CF(1) is attached to CF(0) by a central stalk formed by the gamma and epsilon chains, while a peripheral stalk is formed by the delta and b chains.

It localises to the cell membrane. It carries out the reaction ATP + H2O + 4 H(+)(in) = ADP + phosphate + 5 H(+)(out). In terms of biological role, produces ATP from ADP in the presence of a proton gradient across the membrane. The catalytic sites are hosted primarily by the beta subunits. This is ATP synthase subunit beta from Streptococcus pyogenes serotype M1.